Consider the following 76-residue polypeptide: Probable insulin-like peptide alpha-type 3 (76 aa).

Residues 1-18 (MFVLLIILSIILAQVTDA) form the signal peptide. Disulfide bonds link cysteine 28–cysteine 58, cysteine 40–cysteine 71, and cysteine 46–cysteine 72.

It belongs to the insulin family.

The protein localises to the secreted. This chain is Probable insulin-like peptide alpha-type 3 (ins-23), found in Caenorhabditis elegans.